The following is a 173-amino-acid chain: 3-hydroxydecanoyl-[acyl-carrier-protein] dehydratase (173 aa).

Residue H71 is part of the active site.

It belongs to the thioester dehydratase family. FabA subfamily. In terms of assembly, homodimer.

The protein localises to the cytoplasm. The enzyme catalyses a (3R)-hydroxyacyl-[ACP] = a (2E)-enoyl-[ACP] + H2O. The catalysed reaction is (3R)-hydroxydecanoyl-[ACP] = (2E)-decenoyl-[ACP] + H2O. It catalyses the reaction (2E)-decenoyl-[ACP] = (3Z)-decenoyl-[ACP]. It functions in the pathway lipid metabolism; fatty acid biosynthesis. Necessary for the introduction of cis unsaturation into fatty acids. Catalyzes the dehydration of (3R)-3-hydroxydecanoyl-ACP to E-(2)-decenoyl-ACP and then its isomerization to Z-(3)-decenoyl-ACP. Can catalyze the dehydratase reaction for beta-hydroxyacyl-ACPs with saturated chain lengths up to 16:0, being most active on intermediate chain length. This chain is 3-hydroxydecanoyl-[acyl-carrier-protein] dehydratase, found in Bradyrhizobium sp. (strain ORS 278).